The following is a 139-amino-acid chain: Ribulose bisphosphate carboxylase small subunit (139 aa).

It belongs to the RuBisCO small chain family. As to quaternary structure, heterohexadecamer of 8 large and 8 small subunits.

Its subcellular location is the plastid. The protein localises to the chloroplast. In terms of biological role, ruBisCO catalyzes two reactions: the carboxylation of D-ribulose 1,5-bisphosphate, the primary event in carbon dioxide fixation, as well as the oxidative fragmentation of the pentose substrate in the photorespiration process. Both reactions occur simultaneously and in competition at the same active site. Although the small subunit is not catalytic it is essential for maximal activity. The sequence is that of Ribulose bisphosphate carboxylase small subunit from Olisthodiscus luteus (Marine phytoflagellate).